The sequence spans 340 residues: Acidic endochitinase WIN6 (340 aa).

The N-terminal stretch at 1–22 is a signal peptide; it reads MSVWALFAFFSLFLSLSVRGSA. Positions 23 to 63 constitute a Chitin-binding type-1 domain; the sequence is EQCGRQAGDALCPGGLCCSSYGWCGTTVDYCGIGCQSQCDG. Cystine bridges form between cysteine 25–cysteine 40, cysteine 34–cysteine 46, cysteine 39–cysteine 53, and cysteine 57–cysteine 61. A spacer region spans residues 64 to 85; it reads GGGGDGGDDGCDGGDDGGGDGD. The interval 86 to 340 is chitinase; it reads DGYLSDIIPK…YGLSGLKDTM (255 aa). 3 disulfides stabilise this stretch: cysteine 110/cysteine 172, cysteine 183/cysteine 191, and cysteine 290/cysteine 323. Glutamate 154 (proton donor) is an active-site residue.

Belongs to the glycosyl hydrolase 19 family. Chitinase class I subfamily.

It carries out the reaction Random endo-hydrolysis of N-acetyl-beta-D-glucosaminide (1-&gt;4)-beta-linkages in chitin and chitodextrins.. Functionally, defense against chitin-containing fungal pathogens. The sequence is that of Acidic endochitinase WIN6 (WIN6) from Populus trichocarpa (Western balsam poplar).